A 232-amino-acid chain; its full sequence is Peroxisomal protein PEX21 (232 aa).

Cys5 is covalently cross-linked (Glycyl cysteine thioester (Cys-Gly) (interchain with G-Cter in ubiquitin)).

The protein belongs to the peroxin-21 family. Interacts with PEX7. Post-translationally, monoubiquitinated at Cys-5; acts as a signal for PEX21 extraction and is required for proper export from peroxisomes and recycling.

It localises to the cytoplasm. The protein localises to the cytosol. Its subcellular location is the peroxisome. In terms of biological role, mediates peroxisomal import of proteins containing a C-terminal PTS2-type peroxisomal targeting signal via its interaction with PEX7. Interaction with PEX7 only takes place when PEX7 is associated with cargo proteins containing a PTS2 peroxisomal targeting signal. PEX7 along with PTS2-containing cargo proteins are then translocated through the PEX13-PEX14 docking complex together with PEX21. In Candida glabrata (strain ATCC 2001 / BCRC 20586 / JCM 3761 / NBRC 0622 / NRRL Y-65 / CBS 138) (Yeast), this protein is Peroxisomal protein PEX21 (PEX21).